An 81-amino-acid polypeptide reads, in one-letter code: MKTLLLTLVVVTIVCLDLGYTMTCYNQQSSQPQTTTTCAESSCYKKTWRDHRGTIIERGCGCPTVKPGIQRVCCATDKCNN.

Residues M1 to T21 form the signal peptide. 4 cysteine pairs are disulfide-bonded: C24-C43, C38-C60, C62-C73, and C74-C79.

This sequence belongs to the three-finger toxin family. Short-chain subfamily. Type I alpha-neurotoxin sub-subfamily. In terms of tissue distribution, expressed by the venom gland.

The protein localises to the secreted. Binds to muscle nicotinic acetylcholine receptor (nAChR) and inhibit acetylcholine from binding to the receptor, thereby impairing neuromuscular transmission. The sequence is that of Short neurotoxin 2 from Drysdalia coronoides (White-lipped snake).